The following is a 222-amino-acid chain: Protein-L-isoaspartate O-methyltransferase (222 aa).

The active site involves Ser69.

This sequence belongs to the methyltransferase superfamily. L-isoaspartyl/D-aspartyl protein methyltransferase family.

It is found in the cytoplasm. The enzyme catalyses [protein]-L-isoaspartate + S-adenosyl-L-methionine = [protein]-L-isoaspartate alpha-methyl ester + S-adenosyl-L-homocysteine. Catalyzes the methyl esterification of L-isoaspartyl residues in peptides and proteins that result from spontaneous decomposition of normal L-aspartyl and L-asparaginyl residues. It plays a role in the repair and/or degradation of damaged proteins. This Nitrosomonas eutropha (strain DSM 101675 / C91 / Nm57) protein is Protein-L-isoaspartate O-methyltransferase.